The primary structure comprises 61 residues: Large ribosomal subunit protein bL28 (61 aa).

Residues 1 to 21 are disordered; it reads MAKDYVTGKKTTFGNKRSHAM.

The protein belongs to the bacterial ribosomal protein bL28 family.

This Lactobacillus helveticus (strain DPC 4571) protein is Large ribosomal subunit protein bL28.